A 409-amino-acid polypeptide reads, in one-letter code: Elongation factor Tu, chloroplastic (409 aa).

The region spanning 10 to 214 (KPHVNIGTIG…AVDEYIPTPE (205 aa)) is the tr-type G domain. The interval 19–26 (GHVDHGKT) is G1. Residue 19–26 (GHVDHGKT) coordinates GTP. T26 lines the Mg(2+) pocket. A G2 region spans residues 60–64 (GITIN). The G3 stretch occupies residues 81-84 (DCPG). GTP is bound by residues 81–85 (DCPGH) and 136–139 (NKED). A G4 region spans residues 136–139 (NKED). The G5 stretch occupies residues 174 to 176 (SAL).

The protein belongs to the TRAFAC class translation factor GTPase superfamily. Classic translation factor GTPase family. EF-Tu/EF-1A subfamily.

Its subcellular location is the plastid. The protein resides in the chloroplast. The catalysed reaction is GTP + H2O = GDP + phosphate + H(+). GTP hydrolase that promotes the GTP-dependent binding of aminoacyl-tRNA to the A-site of ribosomes during protein biosynthesis. The polypeptide is Elongation factor Tu, chloroplastic (tufA) (Trieres chinensis (Marine centric diatom)).